The sequence spans 525 residues: 2,3-bisphosphoglycerate-independent phosphoglycerate mutase (525 aa).

Mn(2+)-binding residues include Asp15 and Ser65. Catalysis depends on Ser65, which acts as the Phosphoserine intermediate. Substrate is bound by residues His126, 156-157 (RD), Arg188, Arg194, 258-261 (RPDR), and Lys331. Positions 398, 402, 439, 440, and 457 each coordinate Mn(2+).

The protein belongs to the BPG-independent phosphoglycerate mutase family. In terms of assembly, monomer. Requires Mn(2+) as cofactor.

The enzyme catalyses (2R)-2-phosphoglycerate = (2R)-3-phosphoglycerate. It participates in carbohydrate degradation; glycolysis; pyruvate from D-glyceraldehyde 3-phosphate: step 3/5. Functionally, catalyzes the interconversion of 2-phosphoglycerate and 3-phosphoglycerate. The protein is 2,3-bisphosphoglycerate-independent phosphoglycerate mutase of Picosynechococcus sp. (strain ATCC 27264 / PCC 7002 / PR-6) (Agmenellum quadruplicatum).